Consider the following 102-residue polypeptide: Large ribosomal subunit protein uL24 (102 aa).

Belongs to the universal ribosomal protein uL24 family. Part of the 50S ribosomal subunit.

One of two assembly initiator proteins, it binds directly to the 5'-end of the 23S rRNA, where it nucleates assembly of the 50S subunit. Functionally, one of the proteins that surrounds the polypeptide exit tunnel on the outside of the subunit. This chain is Large ribosomal subunit protein uL24, found in Ralstonia pickettii (strain 12J).